A 407-amino-acid polypeptide reads, in one-letter code: Peptidase T (407 aa).

His-77 serves as a coordination point for Zn(2+). Asp-79 is a catalytic residue. Asp-140 is a binding site for Zn(2+). Glu-174 functions as the Proton acceptor in the catalytic mechanism. 3 residues coordinate Zn(2+): Glu-175, Asp-197, and His-379.

This sequence belongs to the peptidase M20B family. It depends on Zn(2+) as a cofactor.

It is found in the cytoplasm. It carries out the reaction Release of the N-terminal residue from a tripeptide.. In terms of biological role, cleaves the N-terminal amino acid of tripeptides. The chain is Peptidase T from Bacteroides fragilis (strain YCH46).